The primary structure comprises 61 residues: Small ribosomal subunit protein uS14 (61 aa).

The Zn(2+) site is built by cysteine 24, cysteine 27, cysteine 40, and cysteine 43.

This sequence belongs to the universal ribosomal protein uS14 family. Zinc-binding uS14 subfamily. As to quaternary structure, part of the 30S ribosomal subunit. Contacts proteins S3 and S10. Zn(2+) is required as a cofactor.

Binds 16S rRNA, required for the assembly of 30S particles and may also be responsible for determining the conformation of the 16S rRNA at the A site. The polypeptide is Small ribosomal subunit protein uS14 (Sulfurimonas denitrificans (strain ATCC 33889 / DSM 1251) (Thiomicrospira denitrificans (strain ATCC 33889 / DSM 1251))).